The chain runs to 368 residues: Chaperone protein DnaJ (368 aa).

The 66-residue stretch at 5-70 (DYYQVLGVPR…KKRKLYDTHG (66 aa)) folds into the J domain. The CR-type zinc finger occupies 124–201 (GVERQIQIPT…CNGAGRVEDH (78 aa)). Residues Cys137, Cys140, Cys153, Cys156, Cys175, Cys178, Cys189, and Cys192 each contribute to the Zn(2+) site. 4 CXXCXGXG motif repeats span residues 137–144 (CTHCHGSG), 153–160 (CGTCRGSG), 175–182 (CPHCGGRG), and 189–196 (CKVCNGAG).

The protein belongs to the DnaJ family. In terms of assembly, homodimer. The cofactor is Zn(2+).

Its subcellular location is the cytoplasm. In terms of biological role, participates actively in the response to hyperosmotic and heat shock by preventing the aggregation of stress-denatured proteins and by disaggregating proteins, also in an autonomous, DnaK-independent fashion. Unfolded proteins bind initially to DnaJ; upon interaction with the DnaJ-bound protein, DnaK hydrolyzes its bound ATP, resulting in the formation of a stable complex. GrpE releases ADP from DnaK; ATP binding to DnaK triggers the release of the substrate protein, thus completing the reaction cycle. Several rounds of ATP-dependent interactions between DnaJ, DnaK and GrpE are required for fully efficient folding. Also involved, together with DnaK and GrpE, in the DNA replication of plasmids through activation of initiation proteins. The protein is Chaperone protein DnaJ of Xylella fastidiosa (strain 9a5c).